A 367-amino-acid chain; its full sequence is tRNA (cytosine(34)-C(5))-methyltransferase, mitochondrial (367 aa).

S-adenosyl-L-methionine-binding positions include Cys-170–Lys-176, Glu-193, Asp-224, and Asp-242. Cys-296 serves as the catalytic Nucleophile.

It belongs to the class I-like SAM-binding methyltransferase superfamily. RsmB/NOP family.

The protein resides in the mitochondrion matrix. The catalysed reaction is cytidine(34) in mitochondrial tRNA + S-adenosyl-L-methionine = 5-methylcytidine(34) in mitochondrial tRNA + S-adenosyl-L-homocysteine + H(+). In terms of biological role, mitochondrial tRNA methyltransferase that mediates methylation of cytosine to 5-methylcytosine (m5C) at position 34 of mt-tRNA(Met). mt-tRNA(Met) methylation at cytosine(34) takes place at the wobble position of the anticodon and initiates the formation of 5-formylcytosine (f(5)c) at this position. mt-tRNA(Met) containing the f(5)c modification at the wobble position enables recognition of the AUA codon in addition to the AUG codon, expanding codon recognition in mitochondrial translation. This chain is tRNA (cytosine(34)-C(5))-methyltransferase, mitochondrial, found in Danio rerio (Zebrafish).